An 842-amino-acid polypeptide reads, in one-letter code: Transient receptor potential cation channel subfamily V member 1 (842 aa).

The disordered stretch occupies residues 1–64; it reads MKRWVSLDSG…DSEETSPMDC (64 aa). The Cytoplasmic portion of the chain corresponds to 1-435; sequence MKRWVSLDSG…QDKWDRVVKR (435 aa). A compositionally biased stretch (acidic residues) spans 10 to 21; it reads GESEDPLPEDTC. An ANK 1 repeat occupies 113-141; it reads KLYDRRRIFEAVAQNNCQELESLLCFLQR. Arg118 contributes to the ATP binding site. Phosphothreonine; by PKA; in vitro is present on Thr147. The stretch at 156 to 188 is one ANK 2 repeat; it reads TGKTCLLKAMLNLHSGQNDTIPLLLEIARQTDS. ATP is bound by residues Lys158, Lys163, Asn167, 202 to 205, and 213 to 214; these read YKGQ and ER. ANK repeat units lie at residues 206–231, 252–279, 288–324, and 338–361; these read TALH…ADVQ, ELPL…QPAD, NTVL…KLHP, and TPLA…REIL. Position 373 is a phosphothreonine; by PKA; in vitro (Thr373). The stretch at 396 to 418 is one ANK 7 repeat; that stretch reads NSVLEVIAYSSSETPNRHDMLLV. The chain crosses the membrane as a helical span at residues 436 to 457; that stretch reads IFYFNFFVYCLYMIIFTTAAYY. Residues 458-475 lie on the Extracellular side of the membrane; that stretch reads RPVDGLPPYKLRNLPGDY. Residues 476 to 500 traverse the membrane as a helical segment; sequence FRVTGEILSVAGGVYFFFRGIQYFL. At 501 to 513 the chain is on the cytoplasmic side; sequence QRRPSMKALFVDS. Position 505 is a phosphoserine; by PKC/PRKCE (Ser505). 514-515 lines the resiniferatoxin pocket; the sequence is YS. The helical transmembrane segment at 514–535 threads the bilayer; it reads YSEMLFFVQALFMLATVVLYFS. At 536–538 the chain is on the extracellular side; the sequence is HCK. A helical transmembrane segment spans residues 539 to 559; the sequence is EYVATMVFSLALGWINMLYYT. Position 560 (Arg560) interacts with resiniferatoxin. Residues 560–562 lie on the Cytoplasmic side of the membrane; sequence RGF. Residues 563 to 601 form a helical membrane-spanning segment; the sequence is QQMGIYAVMIEKMILRDLCRFMFVYLVFLFGFSTAVVTL. At 602–633 the chain is on the extracellular side; that stretch reads IEDGKNSSTSAESTSHRWRGFGCRSSDSSYNS. Asn607 carries N-linked (GlcNAc...) asparagine glycosylation. The segment at residues 634-655 is an intramembrane region (pore-forming); sequence LYSTCLELFKFTIGMGDLEFTE. Gly647 is a Na(+) binding site. Positions 647–650 match the Selectivity filter motif; it reads GMGD. Position 650 (Asp650) interacts with Ca(2+). Over 656–659 the chain is Extracellular; that stretch reads NYDF. The helical transmembrane segment at 660 to 686 threads the bilayer; sequence KAVFIILLLAYVILTYILLLNMLIALM. Residues 687 to 842 are Cytoplasmic-facing; it reads GETVNKIAQE…FKDSVAAAEK (156 aa). The interval 688-716 is AD; that stretch reads ETVNKIAQESKSIWKLQRAITILDTEKGF. Thr708 is modified (phosphothreonine). Positions 771-805 are interaction with calmodulin; that stretch reads EGVKRTLSFSLRSGRVSGRNWKNFALVPLLRDAST. Ser778 carries the post-translational modification Phosphoserine. The tract at residues 781–796 is required for PIP2-mediated channel inhibition; the sequence is LRSGRVSGRNWKNFAL. Position 804 is a phosphoserine; by PKC/PRKCE and PKC/PRKCZ (Ser804). Position 824 is a phosphoserine (Ser824).

The protein belongs to the transient receptor (TC 1.A.4) family. TrpV subfamily. TRPV1 sub-subfamily. In terms of assembly, homotetramer. Interacts with PIRT. May also form a heteromeric channel with TRPV3. Interacts with CALM, PRKCM and CSK. Interacts with PRKCG and NTRK1, probably by forming a trimeric complex. Interacts with the Scolopendra mutilans RhTx toxin. Interacts with TMEM100. Interacts with PACS2. Phosphorylation by PKA reverses capsaicin-induced dephosphorylation at multiple sites. Phosphorylation by CAMKII seems to regulate binding to vanilloids. Phosphorylated and modulated by PRKCE, PRKCM and probably PRKCZ. Dephosphorylation by calcineurin seems to lead to receptor desensitization and phosphorylation by CAMKII recovers activity.

It localises to the postsynaptic cell membrane. It is found in the cell projection. Its subcellular location is the dendritic spine membrane. The protein resides in the cell membrane. It carries out the reaction Ca(2+)(in) = Ca(2+)(out). It catalyses the reaction Mg(2+)(in) = Mg(2+)(out). The enzyme catalyses Na(+)(in) = Na(+)(out). The catalysed reaction is K(+)(in) = K(+)(out). With respect to regulation, the channel is sensitized by ATP binding. Repeated stimulation with capsaicin gives rise to progressively smaller responses, due to desensitization. This desensitization is triggered by the influx of calcium ions and is inhibited by elevated ATP levels. Ca(2+) and CALM displace ATP from its binding site and trigger a conformation change that leads to a closed, desensitized channel. The double-knot toxin (DkTx) from the Chinese earth tiger tarantula activates the channel and traps it in an open conformation. The Scolopendra mutilans RhTx toxin potentiates the heat activation pathway mediated by this channel by binding to the charge-rich outer pore region (in an activated state). Channel activity is activated via the interaction with PIRT and phosphatidylinositol 4,5-bisphosphate (PIP2). Both PIRT and PIP2 are required to activate channel activity. Intracellular PIP2 inhibits desensitization. Non-selective calcium permeant cation channel involved in detection of noxious chemical and thermal stimuli. Seems to mediate proton influx and may be involved in intracellular acidosis in nociceptive neurons. Involved in mediation of inflammatory pain and hyperalgesia. Sensitized by a phosphatidylinositol second messenger system activated by receptor tyrosine kinases, which involves PKC isozymes and PCL. Activation by vanilloids, like capsaicin, and temperatures higher than 42 degrees Celsius. Upon activation, exhibits a time- and Ca(2+)-dependent outward rectification, followed by a long-lasting refractory state. Mild extracellular acidic pH (6.5) potentiates channel activation by noxious heat and vanilloids, whereas acidic conditions (pH &lt;6) directly activate the channel. Can be activated by endogenous compounds, including 12-hydroperoxytetraenoic acid and bradykinin. Acts as ionotropic endocannabinoid receptor with central neuromodulatory effects. Triggers a form of long-term depression (TRPV1-LTD) mediated by the endocannabinoid anandamine in the hippocampus and nucleus accumbens by affecting AMPA receptors endocytosis. In Oryctolagus cuniculus (Rabbit), this protein is Transient receptor potential cation channel subfamily V member 1 (Trpv1).